Here is a 125-residue protein sequence, read N- to C-terminus: Protein ApaG (125 aa).

The region spanning 3–125 (TAVTEGIEVT…FPLVVPGSLN (123 aa)) is the ApaG domain.

The chain is Protein ApaG from Anaeromyxobacter dehalogenans (strain 2CP-1 / ATCC BAA-258).